Consider the following 223-residue polypeptide: Large ribosomal subunit protein bL21 (223 aa).

The interval Thr-110–Lys-149 is disordered. A compositionally biased stretch (basic and acidic residues) spans Pro-133–Pro-147.

The protein belongs to the bacterial ribosomal protein bL21 family. In terms of assembly, part of the 50S ribosomal subunit. Contacts protein L20.

In terms of biological role, this protein binds to 23S rRNA in the presence of protein L20. This chain is Large ribosomal subunit protein bL21, found in Maricaulis maris (strain MCS10) (Caulobacter maris).